Consider the following 558-residue polypeptide: Dihydroxy-acid dehydratase (558 aa).

D81 contributes to the Mg(2+) binding site. C122 is a binding site for [2Fe-2S] cluster. Mg(2+)-binding residues include D123 and K124. The residue at position 124 (K124) is an N6-carboxylysine. A [2Fe-2S] cluster-binding site is contributed by C195. Position 447 (E447) interacts with Mg(2+). S473 (proton acceptor) is an active-site residue.

The protein belongs to the IlvD/Edd family. In terms of assembly, homodimer. [2Fe-2S] cluster serves as cofactor. Requires Mg(2+) as cofactor.

The catalysed reaction is (2R)-2,3-dihydroxy-3-methylbutanoate = 3-methyl-2-oxobutanoate + H2O. It catalyses the reaction (2R,3R)-2,3-dihydroxy-3-methylpentanoate = (S)-3-methyl-2-oxopentanoate + H2O. It functions in the pathway amino-acid biosynthesis; L-isoleucine biosynthesis; L-isoleucine from 2-oxobutanoate: step 3/4. The protein operates within amino-acid biosynthesis; L-valine biosynthesis; L-valine from pyruvate: step 3/4. Functionally, functions in the biosynthesis of branched-chain amino acids. Catalyzes the dehydration of (2R,3R)-2,3-dihydroxy-3-methylpentanoate (2,3-dihydroxy-3-methylvalerate) into 2-oxo-3-methylpentanoate (2-oxo-3-methylvalerate) and of (2R)-2,3-dihydroxy-3-methylbutanoate (2,3-dihydroxyisovalerate) into 2-oxo-3-methylbutanoate (2-oxoisovalerate), the penultimate precursor to L-isoleucine and L-valine, respectively. The protein is Dihydroxy-acid dehydratase of Bacillus pumilus (strain SAFR-032).